The following is a 460-amino-acid chain: Rab-3A-interacting protein (460 aa).

Phosphoserine is present on residues Ser147, Ser149, Ser247, Ser250, Ser272, and Ser280. Residues 149-244 (SVLEVREKGY…EVAALKTLVL (96 aa)) are a coiled coil. The tract at residues 246–280 (SSPTSPTQEPLAAGKTPFKRGHTRNKSTSSAMSGS) is disordered. Positions 271–280 (KSTSSAMSGS) are enriched in polar residues.

The protein belongs to the SEC2 family. Homodimer. Interacts with the N-terminal region of SSX2. Interacts with the GDP-bound forms of RAB8A and RAB8B. The interaction with RAB8A is prevented by phosphorylation of RAB8A at 'Thr-72'. Interacts with the GDP-bound forms of RAB3A and RAB3D. Interacts with DCDC1. Interacts (via the N-terminal region) with TRAPPC14; this interaction mediates RAB3IP association with the TRAPP II complex. Forms a heterotetramer with RAB11A where RAB3IP homodimer binds two RAB11A subunits. Forms a complex with RAB11A and RAB11FIP3, probably a heterohexamer with two of each protein subunit, where Rabin8/RAB3IP and RAB11FIP3 simultaneously bind to RAB11A; the complex promotes preciliary trafficking. Forms a complex containing RAB11A, ASAP1, RAB3IP, RAP11FIP3 and ARF4; the complex promotes preciliary trafficking; the complex binds to RHO in photoreceptor cells and promotes RHO ciliary transport. As to expression, ubiquitously expressed. Expressed at highest level in testis.

It is found in the cytoplasm. The protein resides in the nucleus. It localises to the cytoskeleton. The protein localises to the cell projection. Its subcellular location is the lamellipodium. Guanine nucleotide exchange factor (GEF) which may activate RAB8A and RAB8B. Promotes the exchange of GDP to GTP, converting inactive GDP-bound Rab proteins into their active GTP-bound form. Mediates the release of GDP from RAB8A and RAB8B but not from RAB3A or RAB5. Modulates actin organization and promotes polarized transport of RAB8A-specific vesicles to the cell surface. Together with RAB11A, RAB8A, the exocyst complex, PARD3, PRKCI, ANXA2, CDC42 and DNMBP promotes transcytosis of PODXL to the apical membrane initiation sites (AMIS), apical surface formation and lumenogenesis. Together with RAB11A and FIP3/RAB11FIP3, parts of the ciliary targeting complex that promotes preciliary vesicle trafficking to mother centriole and ciliogenesis initiation. Part of the ciliary targeting complex containing Rab11, ASAP1, RAB3IP and RAB11FIP3 and ARF4 that promotes RAB3IP preciliary vesicle trafficking to mother centriole and ciliogenesis initiation. This Rattus norvegicus (Rat) protein is Rab-3A-interacting protein (Rab3ip).